Here is a 72-residue protein sequence, read N- to C-terminus: Translation initiation factor IF-1 (72 aa).

Positions 1-72 (MSKDDCIEFE…TKGRIIYRMK (72 aa)) constitute an S1-like domain.

It belongs to the IF-1 family. As to quaternary structure, component of the 30S ribosomal translation pre-initiation complex which assembles on the 30S ribosome in the order IF-2 and IF-3, IF-1 and N-formylmethionyl-tRNA(fMet); mRNA recruitment can occur at any time during PIC assembly.

It localises to the cytoplasm. In terms of biological role, one of the essential components for the initiation of protein synthesis. Stabilizes the binding of IF-2 and IF-3 on the 30S subunit to which N-formylmethionyl-tRNA(fMet) subsequently binds. Helps modulate mRNA selection, yielding the 30S pre-initiation complex (PIC). Upon addition of the 50S ribosomal subunit IF-1, IF-2 and IF-3 are released leaving the mature 70S translation initiation complex. This is Translation initiation factor IF-1 from Xylella fastidiosa (strain Temecula1 / ATCC 700964).